The chain runs to 427 residues: MWEHVKKVDPEIYEVLVNELRRQEYGLELIASENFASLAVIETMGSVLTNKYAEGYPGRRYYGGCEWVDRAEELAIERAKKLFGAEFANVQPHSGSQANMAVYLALAQPGDTIMGMSLSHGGHLTHGAPVNFSGRIFKVVHYGVNLETETIDYDEVRKLALEHRPKIIVAGGSAYARTIDFKRFREIADEVGAYLMVDMAHFAGLVAAGIHPNPVEYAHVVTSTTHKTLRGPRGGLILTNDPEIAKAVDKTIFPGIQGGPLMHVIAAKAVCFKEAMSEEFREYQKQVVKNAKKMAEEMKKRGYRIVSGGTDTHLFLVDLTPKDITGKAAEKALESCGITVNKNTIPNEKRSPFVASGIRIGTPAVTTRGMKEKEMEEIVELIDYVLSSITDEKGTVRPEVREEVTRRVRKLCEMFPLYRDKIEGVEI.

(6S)-5,6,7,8-tetrahydrofolate contacts are provided by residues Leu118 and 122 to 124; that span reads GHL. Residue Lys227 is modified to N6-(pyridoxal phosphate)lysine. (6S)-5,6,7,8-tetrahydrofolate is bound by residues Glu243 and 351 to 353; that span reads SPF.

This sequence belongs to the SHMT family. In terms of assembly, homodimer. It depends on pyridoxal 5'-phosphate as a cofactor.

It is found in the cytoplasm. The enzyme catalyses (6R)-5,10-methylene-5,6,7,8-tetrahydrofolate + glycine + H2O = (6S)-5,6,7,8-tetrahydrofolate + L-serine. Its pathway is one-carbon metabolism; tetrahydrofolate interconversion. It participates in amino-acid biosynthesis; glycine biosynthesis; glycine from L-serine: step 1/1. In terms of biological role, catalyzes the reversible interconversion of serine and glycine with tetrahydrofolate (THF) serving as the one-carbon carrier. This reaction serves as the major source of one-carbon groups required for the biosynthesis of purines, thymidylate, methionine, and other important biomolecules. Also exhibits THF-independent aldolase activity toward beta-hydroxyamino acids, producing glycine and aldehydes, via a retro-aldol mechanism. This Thermotoga neapolitana (strain ATCC 49049 / DSM 4359 / NBRC 107923 / NS-E) protein is Serine hydroxymethyltransferase.